The following is a 309-amino-acid chain: Integral membrane protein sed5 (309 aa).

Topologically, residues 1–288 are cytoplasmic; that stretch reads MSFQDRTAEF…KFYERMSSNR (288 aa). The stretch at 37-66 forms a coiled coil; sequence KHQKSEFTRIAQKIANQINQTGEKLQKLSQ. The 63-residue stretch at 218 to 280 folds into the t-SNARE coiled-coil homology domain; the sequence is DTYSQQRMSS…GSAQREIVKF (63 aa). Residues 289–308 form a helical; Anchor for type IV membrane protein membrane-spanning segment; sequence ALLFKIFGIVIIFFLLWVLV. Thr-309 is a topological domain (vesicular).

The protein belongs to the syntaxin family.

It is found in the membrane. The protein localises to the golgi apparatus membrane. In terms of biological role, required for vesicular transport between the endoplasmic reticulum and the Golgi complex. Acts as a target organelle soluble NSF attachment protein receptor (t-SNARE). The protein is Integral membrane protein sed5 (sed5) of Schizosaccharomyces pombe (strain 972 / ATCC 24843) (Fission yeast).